Consider the following 463-residue polypeptide: Cis-zeatin O-glucosyltransferase 2 (463 aa).

Catalysis depends on H21, which acts as the Proton acceptor. Positions 21 and 91 each coordinate an anthocyanidin. D127 functions as the Charge relay in the catalytic mechanism. UDP-alpha-D-glucose contacts are provided by A339, Q341, H356, W359, N360, S361, E364, D380, and Q381.

The protein belongs to the UDP-glycosyltransferase family. Highly expressed in root. Expressed at much lower level in kernel. Weakly or not expressed in expressed in stems and leaves.

It catalyses the reaction cis-zeatin + UDP-alpha-D-glucose = O-beta-D-glucosyl-cis-zeatin + UDP + H(+). In terms of biological role, utilizes UDP-glucose as the sugar donor and catalyzes the formation of O-beta-D-glucosyl-cis-zeatin from cis-zeatin. May regulate active versus storage forms of cytokinins and could have an impact on seed growth. The protein is Cis-zeatin O-glucosyltransferase 2 of Zea mays (Maize).